A 225-amino-acid chain; its full sequence is uncharacterized protein (225 aa).

3 residues coordinate a divalent metal cation: E69, E71, and D100.

It belongs to the FAH family.

This is an uncharacterized protein from Pyrococcus abyssi (strain GE5 / Orsay).